Reading from the N-terminus, the 955-residue chain is MMNLGSLSLSTSKSSKPMVSISFWIPYFTHWGESLLVCGSAPGLGSGNVKKGLLLKPSQQDDQLIWSGSVSVPPGFSSDYCYYVVDDSKSVLRSEFGMKRKLVVPETLTGGESVHLRDLWQSGDQALPFRSAFKDVIFHHSFDVKVEKPLGVFMNKSDQDDSVVVQFKICCPDIGEGTSVYVLGTPEKLGNWKVENGLRLNYVDDSIWEADCLIPKADFPIKYRYCKVQKEDSIGFESGGNRELSLHSIGSKQEYIVMSDGLFRAMPWRGAGVAVPMFSVRSEDDVGVGEFLDLKLLVDWAVDSGLHLVQLLPVNDTSVHKMWWDSYPYSSLSVFALHPLYLRVQALSERLPEDIKEEIQKAKNQLDKNDVDYEATMETKLSIAKKIFDIEKDQTLNSSTFQKFFSENEGWLKPYAAFCFLRDFFETSDHSQWGTFSDYTDDKLEKLISKDNLHYNTICFHYYIQYHLHVQLSAAAEYARKKGVVLKGDLPIGVDRNSVDTWVYRNLFRMNTSTGAPPDYFDKNGQNWGFPTYNWEEMSKDNYAWWRARLTQMGKYFTAYRIDHILGFFRIWELPAHAMTGLVGKFRPSIPLSQEELEKEGIWDFDRLSKPYIQKKFLEEKFGDFWPFIASNFLNETQKDMYEFKEDCNTEKKIVAKLKSLAEKSLLLENEDKVRRDVFDILRNVVLIKDPEDARKFYPRFNIEDTSSFQDLDDHSKNVLKRLYYDYYFQRQEDLWRKNALKTLPALLNSSNMLACGEDLGLIPSCVHPVMQELGLVGLRIQRMPSESDVKFGIPSNYDYMTVCAPSCHDCSTLRAWWEEDEERRQQYFKEVIGVDGIPPSQCIPEITHFILRQHVEAPSMWAIFPLQDMMALKEEYTTRPATEETINDPTNPKHYWRYRVHVTLDSLLKDTDLKSTIKNLVSSSGRSVPANVSGEDINKSRGEVIANGSTKPNP.

An N-acetylmethionine modification is found at M1. 2 CBM20 domains span residues 13-122 (KSSK…LWQS) and 157-270 (SDQD…PWRG). The tract at residues 925 to 955 (SGRSVPANVSGEDINKSRGEVIANGSTKPNP) is disordered.

This sequence belongs to the disproportionating enzyme family.

It localises to the cytoplasm. It is found in the cytosol. The catalysed reaction is Transfers a segment of a (1-&gt;4)-alpha-D-glucan to a new position in an acceptor, which may be glucose or a (1-&gt;4)-alpha-D-glucan.. Inactivated in response to cold stress. Functionally, cytosolic alpha-glucanotransferase essential for the cytosolic metabolism of maltose, an intermediate on the pathway by which starch is converted to sucrose in leaves at night. Metabolizes maltose exported from the chloroplast and is specific for beta-maltose. May play a role in freezing tolerance. Temperature drop induces inactivation of DPE2 that leads to rapid accumulation of maltose, a solute that protects cells from freezing damage. This is 4-alpha-glucanotransferase DPE2 (DPE2) from Arabidopsis thaliana (Mouse-ear cress).